The sequence spans 804 residues: Leucine--tRNA ligase (804 aa).

Residues 39–50 carry the 'HIGH' region motif; sequence PFPSGKGLHVGH. The 'KMSKS' region signature appears at 573–577; the sequence is KMSKS. Position 576 (lysine 576) interacts with ATP.

The protein belongs to the class-I aminoacyl-tRNA synthetase family.

It is found in the cytoplasm. It catalyses the reaction tRNA(Leu) + L-leucine + ATP = L-leucyl-tRNA(Leu) + AMP + diphosphate. This is Leucine--tRNA ligase from Lactobacillus gasseri (strain ATCC 33323 / DSM 20243 / BCRC 14619 / CIP 102991 / JCM 1131 / KCTC 3163 / NCIMB 11718 / NCTC 13722 / AM63).